Here is a 284-residue protein sequence, read N- to C-terminus: Diaminopimelate epimerase (284 aa).

Asn-14 and Asn-67 together coordinate substrate. Residue Cys-76 is the Proton donor of the active site. Residues 77–78 (GN), Asn-166, Asn-199, and 217–218 (ER) each bind substrate. Catalysis depends on Cys-226, which acts as the Proton acceptor. 227-228 (GT) provides a ligand contact to substrate.

The protein belongs to the diaminopimelate epimerase family. Homodimer.

The protein resides in the cytoplasm. It carries out the reaction (2S,6S)-2,6-diaminopimelate = meso-2,6-diaminopimelate. It functions in the pathway amino-acid biosynthesis; L-lysine biosynthesis via DAP pathway; DL-2,6-diaminopimelate from LL-2,6-diaminopimelate: step 1/1. Its function is as follows. Catalyzes the stereoinversion of LL-2,6-diaminopimelate (L,L-DAP) to meso-diaminopimelate (meso-DAP), a precursor of L-lysine and an essential component of the bacterial peptidoglycan. This chain is Diaminopimelate epimerase, found in Geobacillus sp. (strain WCH70).